The chain runs to 37 residues: Large ribosomal subunit protein bL36c (37 aa).

Belongs to the bacterial ribosomal protein bL36 family.

The protein resides in the plastid. This is Large ribosomal subunit protein bL36c (rpl36) from Epifagus virginiana (Beechdrops).